The sequence spans 114 residues: Gas vesicle protein J1 (114 aa).

The alpha helix 1 stretch occupies residues 13–22; that stretch reads LAEMLEMLLD. Beta-strand stretches follow at residues 25–35 and 40–50; these read VVVNADIAVSV and LLGIELRAAIA. The Conserved in GvpM1/2 but not GvpA motif lies at 46 to 50; that stretch reads RAAIA. 3 alpha helix regions span residues 52–72, 78–87, and 95–105; these read FETAAEYGLEFPTGTDMERVE, SPDQSDPASE, and TNPLSDDSTPT. A disordered region spans residues 63 to 114; that stretch reads PTGTDMERVESAANISPDQSDPASETQSETESTNPLSDDSTPTASTSAEETK. Positions 75 to 98 are enriched in polar residues; the sequence is ANISPDQSDPASETQSETESTNPL. Over residues 99-114 the composition is skewed to low complexity; the sequence is SDDSTPTASTSAEETK.

It belongs to the gas vesicle GvpA family. GvpF to GvpM interact with each other in vitro, and may form multi-subunit complex(es). Interacts with GvpA1.

Its subcellular location is the gas vesicle. Functionally, proteins GvpF to GvpM might be involved in nucleating gas vesicle formation. Mutagenesis of residues 13-61 shows that almost none of them can be substituted and still make gas vesicles. A minor component of the gas vesicle. Gas vesicles are hollow, gas filled proteinaceous nanostructures found in several microbial planktonic microorganisms. They allow positioning of halobacteria at the optimal depth for growth in the poorly aerated, shallow brine pools of their habitat. Expression of a 9.5 kb p-vac DNA fragment containing 2 divergently transcribed regions (gvpD-gvpE-gvpF-gvpG-gvpH-gvpI-gvpJ-gvpK-gvpL-gvpM and gvpA-gvpC-gvpN-gvpO) allows H.volcanii to produce gas vesicles. All site-directed mutagenesis is tested in H.volcanii. A minimal gas vesicle can be made in H.volcanii by gvpA1-gvpO1 plus gvpF1-gvpG1-gvpJ1-gvpK1-gvpL1-gvpM1; lack of enough GvpJ1 prevents formation. A similar region restores gas vesicle production in H.halobium without the p-vac locus, but it still has the c-vac locus. The polypeptide is Gas vesicle protein J1 (gvpJ11) (Halobacterium salinarum (strain ATCC 700922 / JCM 11081 / NRC-1) (Halobacterium halobium)).